The sequence spans 198 residues: Rac-like GTP-binding protein ARAC3 (198 aa).

Residues 13-21 (GDGAVGKTC), 31-38 (FPTDYVPT), 60-64 (DTAGQ), and 118-121 (TKLD) contribute to the GTP site. The Effector region signature appears at 35 to 43 (YVPTVFDNF). Cys-158 carries S-palmitoyl cysteine lipidation. Cysteine methyl ester is present on Cys-195. The S-geranylgeranyl cysteine moiety is linked to residue Cys-195. Residues 196-198 (SIL) constitute a propeptide, removed in mature form.

It belongs to the small GTPase superfamily. Rho family. Interacts with Rho GDP-dissociation inhibitor 1 and ICR1. Binds to SPK1 when in the inactive GDP-bound form. Ubiquitous. Preferentially expressed at the tip of root hairs.

The protein localises to the cytoplasm. It localises to the cell membrane. Its function is as follows. Inactive GDP-bound Rho GTPases reside in the cytosol, are found in a complex with Rho GDP-dissociation inhibitors (Rho GDIs), and are released from the GDI protein in order to translocate to membranes upon activation. Involved in cell polarity control during the actin-dependent tip growth of root hairs, thus regulating root hair length and root hair initiation. Contributes, in a SPK1-dependent manner, to the prevention of cortical microtubules organization into parallel arrays oriented perpendicular to the axis of cell elongation to limit anisotropic cell growth during petal development. SPK1-dependent activation is required for auxin-mediated inhibition of PIN2 internalization during gravitropic responses. The polypeptide is Rac-like GTP-binding protein ARAC3 (Arabidopsis thaliana (Mouse-ear cress)).